The following is a 127-amino-acid chain: Small ribosomal subunit protein uS11 (127 aa).

This sequence belongs to the universal ribosomal protein uS11 family. In terms of assembly, part of the 30S ribosomal subunit.

Its function is as follows. Located on the platform of the 30S subunit. The protein is Small ribosomal subunit protein uS11 of Picrophilus torridus (strain ATCC 700027 / DSM 9790 / JCM 10055 / NBRC 100828 / KAW 2/3).